The sequence spans 375 residues: Chlorophyll a/b light-harvesting protein PcbC (375 aa).

6 helical membrane-spanning segments follow: residues 40 to 60 (LLGAHIAHAGLIAFWAGSITV), 102 to 122 (YFVIGILHLVTSAVLGAGGLF), 151 to 171 (LSLILGHHLLLLGILCLAFVA), 225 to 245 (IIGGHVYIGILELIGGTWHIL), 262 to 282 (AILSYSLGAVGWMGLLSGFFV), and 300 to 320 (GAAAVQYILGVLLLVGHVWHA). The tract at residues 352–375 (ARTFIGRGKPQPEPPKKKGLFGRG) is disordered.

The protein belongs to the PsbB/PsbC family. IsiA/Pcb subfamily. As to quaternary structure, the antenna complex consists of chlorophylls (a and b) and chlorophyll a/b binding proteins. Chlorophyll a is required as a cofactor. Requires chlorophyll b as cofactor.

It is found in the cellular thylakoid membrane. Its function is as follows. The antenna complex functions as a light receptor, it captures and delivers excitation energy to photosystems II and I. The Prochlorales pcb genes are not related to higher plant LHCs. The sequence is that of Chlorophyll a/b light-harvesting protein PcbC (pcbC) from Prochlorothrix hollandica.